We begin with the raw amino-acid sequence, 662 residues long: Serine/threonine kinase-like domain-containing protein STKLD1 (662 aa).

The 202-residue stretch at 1–202 (MLNPGALGVN…ILDMATCSFL (202 aa)) folds into the Protein kinase domain. ATP contacts are provided by residues 2 to 10 (LNPGALGVN) and Lys25. Residues 639–662 (LQEDQLEPPAGQEAPLQGEPLFRP) are disordered.

The protein belongs to the protein kinase superfamily. Ser/Thr protein kinase family. STKL subfamily.

This chain is Serine/threonine kinase-like domain-containing protein STKLD1 (Stkld1), found in Mus musculus (Mouse).